Here is a 371-residue protein sequence, read N- to C-terminus: tRNA (guanine(26)-N(2))-dimethyltransferase (371 aa).

One can recognise a Trm1 methyltransferase domain in the interval 1–370; that stretch reads MDVSEGGVTV…GGLAEVEAAV (370 aa). Residues Arg-36, Arg-66, Asp-81, Asp-107, and Ala-108 each contribute to the S-adenosyl-L-methionine site. 4 residues coordinate Zn(2+): Cys-238, Cys-241, Cys-258, and Cys-261.

The protein belongs to the class I-like SAM-binding methyltransferase superfamily. Trm1 family.

The enzyme catalyses guanosine(26) in tRNA + 2 S-adenosyl-L-methionine = N(2)-dimethylguanosine(26) in tRNA + 2 S-adenosyl-L-homocysteine + 2 H(+). Dimethylates a single guanine residue at position 26 of a number of tRNAs using S-adenosyl-L-methionine as donor of the methyl groups. This chain is tRNA (guanine(26)-N(2))-dimethyltransferase, found in Halobacterium salinarum (strain ATCC 700922 / JCM 11081 / NRC-1) (Halobacterium halobium).